The following is a 469-amino-acid chain: Tubulin gamma chain (469 aa).

Position 142 to 148 (142 to 148) interacts with GTP; the sequence is AGGTGSG.

It belongs to the tubulin family.

Its subcellular location is the cytoplasm. The protein localises to the cytoskeleton. The protein resides in the microtubule organizing center. It is found in the spindle pole body. In terms of biological role, tubulin is the major constituent of microtubules. The gamma chain is found at microtubule organizing centers (MTOC) such as the spindle poles or the centrosome, suggesting that it is involved in the minus-end nucleation of microtubule assembly. The sequence is that of Tubulin gamma chain (TUB4) from Microbotryum violaceum (Anther smut fungus).